We begin with the raw amino-acid sequence, 166 residues long: NAD(P)H-quinone oxidoreductase subunit I, chloroplastic (166 aa).

2 4Fe-4S ferredoxin-type domains span residues 55–84 (GRIH…VDWK) and 95–124 (LNYS…MTEE). Positions 64, 67, 70, 74, 104, 107, 110, and 114 each coordinate [4Fe-4S] cluster.

This sequence belongs to the complex I 23 kDa subunit family. NDH is composed of at least 16 different subunits, 5 of which are encoded in the nucleus. The cofactor is [4Fe-4S] cluster.

It localises to the plastid. It is found in the chloroplast thylakoid membrane. It carries out the reaction a plastoquinone + NADH + (n+1) H(+)(in) = a plastoquinol + NAD(+) + n H(+)(out). The catalysed reaction is a plastoquinone + NADPH + (n+1) H(+)(in) = a plastoquinol + NADP(+) + n H(+)(out). NDH shuttles electrons from NAD(P)H:plastoquinone, via FMN and iron-sulfur (Fe-S) centers, to quinones in the photosynthetic chain and possibly in a chloroplast respiratory chain. The immediate electron acceptor for the enzyme in this species is believed to be plastoquinone. Couples the redox reaction to proton translocation, and thus conserves the redox energy in a proton gradient. The protein is NAD(P)H-quinone oxidoreductase subunit I, chloroplastic of Calea megacephala.